The primary structure comprises 734 residues: Diacylglycerol kinase alpha (734 aa).

EF-hand domains follow at residues 109–144 (RPED…MMRM) and 154–189 (ELRP…TVPL). Aspartate 122, aspartate 124, asparagine 126, glutamate 133, aspartate 167, aspartate 169, serine 171, serine 173, and glutamate 178 together coordinate Ca(2+). 2 Phorbol-ester/DAG-type zinc fingers span residues 204 to 252 (QHMW…ALPC) and 268 to 318 (SHVW…GHEC). One can recognise a DAGKc domain in the interval 371 to 505 (SNTHPLLVFV…MDRWSVEVIP (135 aa)). Lysine 483 bears the N6-acetyllysine mark.

Belongs to the eukaryotic diacylglycerol kinase family. In terms of assembly, monomer.

Its subcellular location is the cytoplasm. The protein resides in the cytosol. It catalyses the reaction a 1,2-diacyl-sn-glycerol + ATP = a 1,2-diacyl-sn-glycero-3-phosphate + ADP + H(+). The enzyme catalyses a 1-O-alkyl-sn-glycerol + ATP = a 1-O-alkyl-sn-glycero-3-phosphate + ADP + H(+). It carries out the reaction 1-O-alkyl-2-acyl-sn-glycerol + ATP = 1-O-alkyl-2-acyl-sn-glycero-3-phosphate + ADP + H(+). The catalysed reaction is 1,2-dihexadecanoyl-sn-glycerol + ATP = 1,2-dihexadecanoyl-sn-glycero-3-phosphate + ADP + H(+). It catalyses the reaction 1-hexadecanoyl-2-(9Z-octadecenoyl)-sn-glycerol + ATP = 1-hexadecanoyl-2-(9Z-octadecenoyl)-sn-glycero-3-phosphate + ADP + H(+). The enzyme catalyses 2-(9Z-octadecenoyl)-glycerol + ATP = 2-(9Z-octadecenoyl)-sn-glycero-3-phosphate + ADP + H(+). It carries out the reaction 1,2-di-(9Z-octadecenoyl)-sn-glycerol + ATP = 1,2-di-(9Z-octadecenoyl)-sn-glycero-3-phosphate + ADP + H(+). The catalysed reaction is 1-octadecanoyl-2-(5Z,8Z,11Z,14Z-eicosatetraenoyl)-sn-glycerol + ATP = 1-octadecanoyl-2-(5Z,8Z,11Z,14Z-eicosatetraenoyl)-sn-glycero-3-phosphate + ADP + H(+). It catalyses the reaction 1,2-didecanoyl-sn-glycerol + ATP = 1,2-didecanoyl-sn-glycero-3-phosphate + ADP + H(+). The enzyme catalyses 1-O-hexadecyl-2-acetyl-sn-glycerol + ATP = 1-O-hexadecyl-2-acetyl-sn-glycero-3-phosphate + ADP + H(+). It carries out the reaction 1-O-hexadecyl-2-(5Z,8Z,11Z,14Z-eicosatetraenoyl)-sn-glycerol + ATP = 1-O-hexadecyl-2-(5Z,8Z,11Z,14Z-eicosatetraenoyl)-sn-glycero-3-phosphate + ADP + H(+). The catalysed reaction is 1-O-hexadecyl-2-(9Z-octadecenoyl)-sn-glycerol + ATP = 1-O-hexadecyl-2-(9Z-octadecenoyl)-sn-glycero-3-phosphate + ADP + H(+). It catalyses the reaction 1-O-hexadecyl-sn-glycerol + ATP = 1-O-hexadecyl-sn-glycero-3-phosphate + ADP + H(+). It functions in the pathway lipid metabolism; glycerolipid metabolism. With respect to regulation, stimulated by calcium and phosphatidylserine. Its function is as follows. Diacylglycerol kinase that converts diacylglycerol/DAG into phosphatidic acid/phosphatidate/PA and regulates the respective levels of these two bioactive lipids. Thereby, acts as a central switch between the signaling pathways activated by these second messengers with different cellular targets and opposite effects in numerous biological processes. Also plays an important role in the biosynthesis of complex lipids. Can also phosphorylate 1-alkyl-2-acylglycerol in vitro as efficiently as diacylglycerol provided it contains an arachidonoyl group. Also involved in the production of alkyl-lysophosphatidic acid, another bioactive lipid, through the phosphorylation of 1-alkyl-2-acetyl glycerol. This Bos taurus (Bovine) protein is Diacylglycerol kinase alpha (DGKA).